Consider the following 423-residue polypeptide: MLRVRCLRGGSRGAEAVHYIGSRLGRTLTGWVQRTFQSTQAATASSRNSCAADDKATEPLPKDCPVSSYNEWDPLEEVIVGRAENACVPPFTIEVKANTYEKYWPFYQKQGGHYFPKDHLKKAVAEIEEMCNILKTEGVTVRRPDPIDWSLKYKTPDFESTGLYSAMPRDILIVVGNEIIEAPMAWRSRFFEYRAYRSIIKDYFHRGAKWTTAPKPTMADELYNQDYPIHSVEDRHKLAAQGKFVTTEFEPCFDAADFIRAGRDIFAQRSQVTNYLGIEWMRRHLAPDYRVHIISFKDPNPMHIDATFNIIGPGIVLSNPDRPCHQIDLFKKAGWTIITPPTPIIPDDHPLWMSSKWLSMNVLMLDEKRVMVDANEVPIQKMFEKLGITTIKVNIRNANSLGGGFHCWTCDVRRRGTLQSYLD.

Residues 1 to 43 constitute a mitochondrion transit peptide; sequence MLRVRCLRGGSRGAEAVHYIGSRLGRTLTGWVQRTFQSTQAAT. Phosphoserine is present on residues Ser46 and Ser49. Asp170 lines the arginine pocket. Active-site residues include Asp254 and His303. The arginine site is built by Asp305, Arg322, Ser354, and Ser355. The residue at position 385 (Lys385) is an N6-acetyllysine. Cys407 acts as the Amidino-cysteine intermediate in catalysis.

This sequence belongs to the amidinotransferase family. As to quaternary structure, homodimer. There is an equilibrium between the monomeric and dimeric forms, shifted towards the side of the monomer. Expressed in brain, heart, kidney, liver, lung, salivary gland and skeletal muscle tissue, with the highest expression in kidney. Biallelically expressed in placenta and fetal tissues.

It localises to the mitochondrion inner membrane. It is found in the cytoplasm. The catalysed reaction is L-arginine + glycine = guanidinoacetate + L-ornithine. It carries out the reaction 4-aminobutanoate + L-arginine = 4-guanidinobutanoate + L-ornithine. It catalyses the reaction beta-alanine + L-arginine = 3-guanidinopropanoate + L-ornithine. The enzyme catalyses taurine + L-arginine = taurocyamine + L-ornithine. It participates in amine and polyamine biosynthesis; creatine biosynthesis; creatine from L-arginine and glycine: step 1/2. Transamidinase that catalyzes the transfer of the amidino group of L-arginine onto the amino moiety of acceptor metabolites such as glycine, beta-alanine, gamma-aminobutyric acid (GABA) and taurine yielding the corresponding guanidine derivatives. Catalyzes the rate-limiting step of creatine biosynthesis, namely the transfer of the amidino group from L-arginine to glycine to generate guanidinoacetate, which is then methylated by GAMT to form creatine. Provides creatine as a source for ATP generation in tissues with high energy demands, in particular skeletal muscle, heart and brain. The sequence is that of Glycine amidinotransferase, mitochondrial (GATM) from Homo sapiens (Human).